Reading from the N-terminus, the 220-residue chain is 14-3-3-like protein (220 aa).

It belongs to the 14-3-3 family.

This Spinacia oleracea (Spinach) protein is 14-3-3-like protein.